We begin with the raw amino-acid sequence, 301 residues long: MCGIVGLFLKDSRLEPQLGQLLSDMLITMTDRGPDSAGLAIYGSATEGKAKVTIQSAKPEIDFADLERDLAEAGVPARVAVKSTHAVVAIAAARLADVRAVLAAIRPDVRIMGAGDSVEIYKEVGLPKDVVARFDVRSMGGSHGIGHTRMATESAVTTLGAHPFSTGSDQCLVHNGSLSNHNNLRRELIREGIAFETQNDTEVAAAYLTAEMAKGKDLGQALTGALDDLDGFFTFVVGTKSGFGVVRDPIACKPAVMAETDRYVAFGSEYRALVNLPDIESARIWEPEPATVYFWDHQKAA.

Residue Cys2 is part of the active site. The region spanning 2-298 (CGIVGLFLKD…PATVYFWDHQ (297 aa)) is the Glutamine amidotransferase type-2 domain.

This chain is Glutamine amidotransferase-like protein GlxB (glxB), found in Rhizobium meliloti (strain 1021) (Ensifer meliloti).